A 441-amino-acid polypeptide reads, in one-letter code: MVKLDFSSQDEENDEDLTKEFVRDEAPMEETTSEAVKQIATTTKETLKDVVVNKVIDVKDVVKEKVMQQTGMPEWAFVFLGFVFILLVLACAFCLIRKLFGKKRHGEKNKKGGLKGFFGKGQDVVDGKNIQGMAQDLEELGDAMEQNEKEQAEEKEEVKLGRIQYKLDYDFQQGQLTVTVIQAEDLPGMDMSGTSDPYVKLYLLPEKKKKVETKVHRKTLNPVFNETFIFKVAFNEITAKTLVFAIYDFDRFSKHDQIGQVLIPLGKIDLGAVIEEWKDIAPPPDDKEAEKSLGDICFSLRYVPTAGKLTVVILEAKNLKKMDVGGLSDPYVKIVLMQGGKRLKKKKTSIKKCTLNPYYNESFSFEVPFEQIQKVSLMITVMDYDKLGSNDAIGRCLLGCNGTGAELRHWMDMLASPRRPIAQWHTLGPVEEEGDKKDDKK.

At 1–69 the chain is on the vesicular side; it reads MVKLDFSSQD…DVVKEKVMQQ (69 aa). A helical membrane pass occupies residues 70-96; that stretch reads TGMPEWAFVFLGFVFILLVLACAFCLI. The Cytoplasmic portion of the chain corresponds to 97–441; sequence RKLFGKKRHG…EEGDKKDDKK (345 aa). 2 C2 domains span residues 159–278 and 292–425; these read KLGR…EEWK and SLGD…AQWH. Positions 190, 196, 248, 249, 250, 253, 254, 256, 323, 329, 383, 385, and 391 each coordinate Ca(2+).

It belongs to the synaptotagmin family. Requires Ca(2+) as cofactor. As to expression, localized to regions known to be rich in synapses and appears to be associated with synaptic vesicles. Also found in some non-neuronal secretory structures.

The protein resides in the cytoplasmic vesicle. The protein localises to the secretory vesicle. It is found in the synaptic vesicle membrane. Its subcellular location is the synapse. Functionally, may have a regulatory role in the membrane interactions during trafficking of synaptic vesicles at the active zone of the synapse. It binds acidic phospholipids with a specificity that requires the presence of both an acidic head group and a diacyl backbone. Involved in necrotic cell death. This Caenorhabditis elegans protein is Synaptotagmin-1 (snt-1).